Here is a 552-residue protein sequence, read N- to C-terminus: Threonylcarbamoyladenosine tRNA methylthiotransferase (552 aa).

Positions 31 to 61 are disordered; that stretch reads YENKKTVTVRAKKRSQIRLESQEEEEKPKPT. Residues 71–178 form the MTTase N-terminal domain; sequence QKVFVKTWGC…VVEVVEETLK (108 aa). [4Fe-4S] cluster contacts are provided by C80, C115, C144, C221, C225, and C228. The region spanning 207–438 is the Radical SAM core domain; sequence RKNPLIEIIS…DLFYSYEPYA (232 aa). The region spanning 438-500 is the TRAM domain; that stretch reads ADRVGEIYTV…KFSMVGEILD (63 aa). Residues 532–552 form a helical membrane-spanning segment; that stretch reads FGIALVLGSLAFLIQLVVRLL.

The protein belongs to the methylthiotransferase family. CDKAL1 subfamily. It depends on [4Fe-4S] cluster as a cofactor.

It is found in the membrane. The enzyme catalyses N(6)-L-threonylcarbamoyladenosine(37) in tRNA + (sulfur carrier)-SH + AH2 + 2 S-adenosyl-L-methionine = 2-methylsulfanyl-N(6)-L-threonylcarbamoyladenosine(37) in tRNA + (sulfur carrier)-H + 5'-deoxyadenosine + L-methionine + A + S-adenosyl-L-homocysteine + 2 H(+). In terms of biological role, catalyzes the methylthiolation of N6-threonylcarbamoyladenosine (t(6)A), leading to the formation of 2-methylthio-N6-threonylcarbamoyladenosine (ms(2)t(6)A) at position 37 in tRNAs that read codons beginning with adenine. This chain is Threonylcarbamoyladenosine tRNA methylthiotransferase, found in Drosophila melanogaster (Fruit fly).